The primary structure comprises 227 residues: Peroxiredoxin 1 (227 aa).

Residues Pro6–Met161 enclose the Thioredoxin domain. Residue Cys48 is the Cysteine sulfenic acid (-SOH) intermediate of the active site. Substrate is bound at residue Arg124.

Belongs to the peroxiredoxin family. Prx6 subfamily. Homodecamer. Pentamer of dimers that assemble into a ring structure.

The protein localises to the cytoplasm. The catalysed reaction is a hydroperoxide + [thioredoxin]-dithiol = an alcohol + [thioredoxin]-disulfide + H2O. In terms of biological role, thiol-specific peroxidase that catalyzes the reduction of hydrogen peroxide and organic hydroperoxides to water and alcohols, respectively. Plays a role in cell protection against oxidative stress by detoxifying peroxides. This Picrophilus torridus (strain ATCC 700027 / DSM 9790 / JCM 10055 / NBRC 100828 / KAW 2/3) protein is Peroxiredoxin 1.